The chain runs to 194 residues: Outer-membrane lipoprotein LolB (194 aa).

The N-terminal stretch at 1 to 18 (MKLLQHLTLIFCLLILTA) is a signal peptide. A lipid anchor (N-palmitoyl cysteine) is attached at cysteine 19. Cysteine 19 carries the S-diacylglycerol cysteine lipid modification.

It belongs to the LolB family. In terms of assembly, monomer.

The protein resides in the cell outer membrane. In terms of biological role, plays a critical role in the incorporation of lipoproteins in the outer membrane after they are released by the LolA protein. In Tolumonas auensis (strain DSM 9187 / NBRC 110442 / TA 4), this protein is Outer-membrane lipoprotein LolB.